Consider the following 209-residue polypeptide: GTP-binding nuclear protein Ran1A (209 aa).

A Small GTPase Ran-type domain is found at N1–D162. Residue D9–T16 coordinates GTP. A switch-I region spans residues K28–V36. GTP contacts are provided by residues G59, N113–D116, and S141–K143. Positions G59–Q75 are switch-II. Residues Q187 to A196 are compositionally biased toward low complexity. A disordered region spans residues Q187 to D209.

It belongs to the small GTPase superfamily. Ran family. Found in a nuclear export complex with RanGTP, exportin and pre-miRNA.

It localises to the nucleus. Its function is as follows. GTP-binding protein involved in nucleocytoplasmic transport. Required for the import of protein into the nucleus and also for RNA export. Involved in chromatin condensation and control of cell cycle. This is GTP-binding nuclear protein Ran1A (RAN1A) from Lotus japonicus (Lotus corniculatus var. japonicus).